The following is a 515-amino-acid chain: Maturase K (515 aa).

Belongs to the intron maturase 2 family. MatK subfamily.

The protein resides in the plastid. Its subcellular location is the chloroplast. Its function is as follows. Usually encoded in the trnK tRNA gene intron. Probably assists in splicing its own and other chloroplast group II introns. The polypeptide is Maturase K (Pinus cembra (Swiss stone pine)).